The following is a 557-amino-acid chain: ADP-ribosylation factor-binding protein GGA1 (557 aa).

Positions 29–165 (ACRSTLPEPD…LLKYKGYTFP (137 aa)) constitute a VHS domain. The 126-residue stretch at 192-317 (ERAQAAKLEE…LLKRYKSIKG (126 aa)) folds into the GAT domain. Thr348 is subject to Phosphothreonine. Phosphoserine occurs at positions 353, 357, 378, and 394. The GAE domain maps to 440-556 (AQSQRHILNQ…EESGTTSLPT (117 aa)).

As to quaternary structure, binds to ARF1 and ARF2.

The protein resides in the golgi apparatus. Its subcellular location is the trans-Golgi network. Functionally, may play a role in the regulation of membrane traffic through the trans-Golgi network. This is ADP-ribosylation factor-binding protein GGA1 (GGA1) from Saccharomyces cerevisiae (strain ATCC 204508 / S288c) (Baker's yeast).